Reading from the N-terminus, the 602-residue chain is Prostaglandin G/H synthase 1 (602 aa).

Residues 1–26 (MSRRSLSLQFPLLLLLLLLPPPPVLL) form the signal peptide. Residues 34 to 72 (PVNPCCYYPCQNQGVCVRFGLDHYQCDCTRTGYSGPNCT) form the EGF-like domain. Intrachain disulfides connect cysteine 38–cysteine 49, cysteine 39–cysteine 161, cysteine 43–cysteine 59, and cysteine 61–cysteine 71. 3 N-linked (GlcNAc...) asparagine glycosylation sites follow: asparagine 70, asparagine 106, and asparagine 146. Histidine 209 serves as the catalytic Proton acceptor. Catalysis depends on tyrosine 387, which acts as the For cyclooxygenase activity. Histidine 390 lines the heme b pocket. The N-linked (GlcNAc...) asparagine glycan is linked to asparagine 412. Cysteines 571 and 577 form a disulfide.

Belongs to the prostaglandin G/H synthase family. Homodimer. Requires heme b as cofactor.

The protein localises to the microsome membrane. It localises to the endoplasmic reticulum membrane. It catalyses the reaction (5Z,8Z,11Z,14Z)-eicosatetraenoate + AH2 + 2 O2 = prostaglandin H2 + A + H2O. The catalysed reaction is (5Z,8Z,11Z,14Z)-eicosatetraenoate + 2 O2 = prostaglandin G2. It carries out the reaction prostaglandin G2 + AH2 = prostaglandin H2 + A + H2O. The enzyme catalyses (9Z,12Z)-octadecadienoate + AH2 + O2 = (9R)-hydroxy-(10E,12Z)-octadecadienoate + A + H2O. It catalyses the reaction (9Z,12Z)-octadecadienoate + AH2 + O2 = (9S)-hydroxy-(10E,12Z)-octadecadienoate + A + H2O. The catalysed reaction is (9Z,12Z)-octadecadienoate + AH2 + O2 = (13S)-hydroxy-(9Z,11E)-octadecadienoate + A + H2O. It carries out the reaction (9Z,12Z)-octadecadienoate + AH2 + O2 = (13R)-hydroxy-(9Z,11E)-octadecadienoate + A + H2O. It participates in lipid metabolism; prostaglandin biosynthesis. Its activity is regulated as follows. The cyclooxygenase activity is inhibited by nonsteroidal anti-inflammatory drugs (NSAIDs) including ibuprofen, flurbiprofen, ketoprofen, naproxen, flurbiprofen, anirolac, fenclofenac and diclofenac. Dual cyclooxygenase and peroxidase that plays an important role in the biosynthesis pathway of prostanoids, a class of C20 oxylipins mainly derived from arachidonate ((5Z,8Z,11Z,14Z)-eicosatetraenoate, AA, C20:4(n-6)), with a particular role in the inflammatory response. The cyclooxygenase activity oxygenates AA to the hydroperoxy endoperoxide prostaglandin G2 (PGG2), and the peroxidase activity reduces PGG2 to the hydroxy endoperoxide prostaglandin H2 (PGH2), the precursor of all 2-series prostaglandins and thromboxanes. This complex transformation is initiated by abstraction of hydrogen at carbon 13 (with S-stereochemistry), followed by insertion of molecular O2 to form the endoperoxide bridge between carbon 9 and 11 that defines prostaglandins. The insertion of a second molecule of O2 (bis-oxygenase activity) yields a hydroperoxy group in PGG2 that is then reduced to PGH2 by two electrons. Involved in the constitutive production of prostanoids in particular in the stomach and platelets. In gastric epithelial cells, it is a key step in the generation of prostaglandins, such as prostaglandin E2 (PGE2), which plays an important role in cytoprotection. In platelets, it is involved in the generation of thromboxane A2 (TXA2), which promotes platelet activation and aggregation, vasoconstriction and proliferation of vascular smooth muscle cells. Can also use linoleate (LA, (9Z,12Z)-octadecadienoate, C18:2(n-6)) as substrate and produce hydroxyoctadecadienoates (HODEs) in a regio- and stereospecific manner, being (9R)-HODE ((9R)-hydroxy-(10E,12Z)-octadecadienoate) and (13S)-HODE ((13S)-hydroxy-(9Z,11E)-octadecadienoate) its major products. This Rattus norvegicus (Rat) protein is Prostaglandin G/H synthase 1.